Reading from the N-terminus, the 179-residue chain is Large ribosomal subunit protein uL5 (179 aa).

It belongs to the universal ribosomal protein uL5 family. In terms of assembly, part of the 50S ribosomal subunit; part of the 5S rRNA/L5/L18/L25 subcomplex. Contacts the 5S rRNA and the P site tRNA. Forms a bridge to the 30S subunit in the 70S ribosome.

Its function is as follows. This is one of the proteins that bind and probably mediate the attachment of the 5S RNA into the large ribosomal subunit, where it forms part of the central protuberance. In the 70S ribosome it contacts protein S13 of the 30S subunit (bridge B1b), connecting the 2 subunits; this bridge is implicated in subunit movement. Contacts the P site tRNA; the 5S rRNA and some of its associated proteins might help stabilize positioning of ribosome-bound tRNAs. The protein is Large ribosomal subunit protein uL5 of Bacillus cereus (strain Q1).